A 203-amino-acid polypeptide reads, in one-letter code: Kunitz trypsin inhibitor 6 (203 aa).

The first 21 residues, 1 to 21, serve as a signal peptide directing secretion; that stretch reads MKTFQLMMISFLFVAITTTSG. Cys70 and Cys115 are joined by a disulfide. N-linked (GlcNAc...) asparagine glycosylation is found at Asn94, Asn127, Asn136, Asn144, and Asn197.

Belongs to the protease inhibitor I3 (leguminous Kunitz-type inhibitor) family.

Exhibits Kunitz trypsin protease inhibitor activity. The protein is Kunitz trypsin inhibitor 6 of Arabidopsis thaliana (Mouse-ear cress).